We begin with the raw amino-acid sequence, 27 residues long: Alpha-amylase/trypsin inhibitor CM17 (27 aa).

Belongs to the protease inhibitor I6 (cereal trypsin/alpha-amylase inhibitor) family. As to expression, developing endosperm.

It localises to the secreted. Alpha-amylase/trypsin inhibitor. It could be involved in insect defense mechanisms. This chain is Alpha-amylase/trypsin inhibitor CM17, found in Triticum aestivum (Wheat).